A 549-amino-acid polypeptide reads, in one-letter code: Glucose-6-phosphate isomerase (549 aa).

The active-site Proton donor is the glutamate 355. Active-site residues include histidine 387 and lysine 515.

The protein belongs to the GPI family.

It is found in the cytoplasm. The enzyme catalyses alpha-D-glucose 6-phosphate = beta-D-fructose 6-phosphate. The protein operates within carbohydrate biosynthesis; gluconeogenesis. Its pathway is carbohydrate degradation; glycolysis; D-glyceraldehyde 3-phosphate and glycerone phosphate from D-glucose: step 2/4. Its function is as follows. Catalyzes the reversible isomerization of glucose-6-phosphate to fructose-6-phosphate. The protein is Glucose-6-phosphate isomerase of Haemophilus influenzae (strain 86-028NP).